Consider the following 737-residue polypeptide: Phosphoribosylformylglycinamidine synthase subunit PurL (737 aa).

Residue histidine 50 is part of the active site. Positions 53 and 92 each coordinate ATP. Glutamate 94 is a binding site for Mg(2+). Substrate contacts are provided by residues 95–98 (SHNH) and arginine 117. Histidine 96 (proton acceptor) is an active-site residue. Residue aspartate 118 participates in Mg(2+) binding. Position 241 (glutamine 241) interacts with substrate. Position 269 (aspartate 269) interacts with Mg(2+). 313-315 (ESQ) serves as a coordination point for substrate. ATP is bound by residues aspartate 494 and glycine 531. A Mg(2+)-binding site is contributed by asparagine 532. Serine 534 is a binding site for substrate.

It belongs to the FGAMS family. Monomer. Part of the FGAM synthase complex composed of 1 PurL, 1 PurQ and 2 PurS subunits.

Its subcellular location is the cytoplasm. The enzyme catalyses N(2)-formyl-N(1)-(5-phospho-beta-D-ribosyl)glycinamide + L-glutamine + ATP + H2O = 2-formamido-N(1)-(5-O-phospho-beta-D-ribosyl)acetamidine + L-glutamate + ADP + phosphate + H(+). It participates in purine metabolism; IMP biosynthesis via de novo pathway; 5-amino-1-(5-phospho-D-ribosyl)imidazole from N(2)-formyl-N(1)-(5-phospho-D-ribosyl)glycinamide: step 1/2. Its function is as follows. Part of the phosphoribosylformylglycinamidine synthase complex involved in the purines biosynthetic pathway. Catalyzes the ATP-dependent conversion of formylglycinamide ribonucleotide (FGAR) and glutamine to yield formylglycinamidine ribonucleotide (FGAM) and glutamate. The FGAM synthase complex is composed of three subunits. PurQ produces an ammonia molecule by converting glutamine to glutamate. PurL transfers the ammonia molecule to FGAR to form FGAM in an ATP-dependent manner. PurS interacts with PurQ and PurL and is thought to assist in the transfer of the ammonia molecule from PurQ to PurL. The chain is Phosphoribosylformylglycinamidine synthase subunit PurL from Nitrobacter winogradskyi (strain ATCC 25391 / DSM 10237 / CIP 104748 / NCIMB 11846 / Nb-255).